The following is a 373-amino-acid chain: DNA primase small subunit PriS (373 aa).

Residues Asp95, Asp97, and Asp281 contribute to the active site.

It belongs to the eukaryotic-type primase small subunit family. As to quaternary structure, heterodimer of a small subunit (PriS) and a large subunit (PriL). Mg(2+) serves as cofactor. The cofactor is Mn(2+).

Functionally, catalytic subunit of DNA primase, an RNA polymerase that catalyzes the synthesis of short RNA molecules used as primers for DNA polymerase during DNA replication. The small subunit contains the primase catalytic core and has DNA synthesis activity on its own. Binding to the large subunit stabilizes and modulates the activity, increasing the rate of DNA synthesis while decreasing the length of the DNA fragments, and conferring RNA synthesis capability. The DNA polymerase activity may enable DNA primase to also catalyze primer extension after primer synthesis. May also play a role in DNA repair. In Nitrosopumilus maritimus (strain SCM1), this protein is DNA primase small subunit PriS.